We begin with the raw amino-acid sequence, 30 residues long: Cliotide T6 (30 aa).

Positions 1 to 30 (SIPCGESCVYIPCITTIVGCSCKDKVCYKN) form a cross-link, cyclopeptide (Ser-Asn). Cystine bridges form between Cys-4–Cys-20, Cys-8–Cys-22, and Cys-13–Cys-27.

Contains 3 disulfide bonds. Post-translationally, this is a cyclic peptide. In terms of tissue distribution, expressed in pod but not in flower, stem, shoot, leaf, seed, root and nodule (at protein level).

Probably participates in a plant defense mechanism. The protein is Cliotide T6 of Clitoria ternatea (Butterfly pea).